The following is a 305-amino-acid chain: Oligopeptide transport system permease protein OppC (305 aa).

6 helical membrane-spanning segments follow: residues 43 to 63 (AMVGLIIIVLIILMAIFAPMF), 105 to 125 (ISIFIGVAAAVLDLLIGVIWG), 166 to 185 (LFTIIIAMTITGWINMARIV), 212 to 232 (LFKHIVPNAMGSILVTMTLTV), 236 to 256 (IFTEAFLSYLGLGVPAPLASW), and 274 to 294 (LFFPAGFICITMFGFNVVGDG). The ABC transmembrane type-1 domain occupies 103-292 (ARISIFIGVA…ITMFGFNVVG (190 aa)).

This sequence belongs to the binding-protein-dependent transport system permease family. OppBC subfamily. In terms of assembly, the complex is composed of two ATP-binding proteins (OppD and OppF), two transmembrane proteins (OppB and OppC) and a solute-binding protein (OppA).

It is found in the cell membrane. Functionally, part of the ABC transporter complex OppABCDF involved in the uptake of oligopeptides. Probably responsible for the translocation of the substrate across the membrane. Required for sporulation and genetic competence. This chain is Oligopeptide transport system permease protein OppC, found in Bacillus subtilis (strain 168).